A 475-amino-acid chain; its full sequence is Bifunctional protein HldE (475 aa).

The tract at residues 1–321 (MADKIDISLY…RALHQITASH (321 aa)) is ribokinase. ATP is bound at residue 197–200 (NLKE). Aspartate 266 is an active-site residue. Residues 346 to 475 (MTNGCFDILH…TSRLVEKMLN (130 aa)) form a cytidylyltransferase region.

This sequence in the N-terminal section; belongs to the carbohydrate kinase PfkB family. In the C-terminal section; belongs to the cytidylyltransferase family. As to quaternary structure, homodimer.

The catalysed reaction is D-glycero-beta-D-manno-heptose 7-phosphate + ATP = D-glycero-beta-D-manno-heptose 1,7-bisphosphate + ADP + H(+). It catalyses the reaction D-glycero-beta-D-manno-heptose 1-phosphate + ATP + H(+) = ADP-D-glycero-beta-D-manno-heptose + diphosphate. It functions in the pathway nucleotide-sugar biosynthesis; ADP-L-glycero-beta-D-manno-heptose biosynthesis; ADP-L-glycero-beta-D-manno-heptose from D-glycero-beta-D-manno-heptose 7-phosphate: step 1/4. Its pathway is nucleotide-sugar biosynthesis; ADP-L-glycero-beta-D-manno-heptose biosynthesis; ADP-L-glycero-beta-D-manno-heptose from D-glycero-beta-D-manno-heptose 7-phosphate: step 3/4. Its function is as follows. Catalyzes the phosphorylation of D-glycero-D-manno-heptose 7-phosphate at the C-1 position to selectively form D-glycero-beta-D-manno-heptose-1,7-bisphosphate. Functionally, catalyzes the ADP transfer from ATP to D-glycero-beta-D-manno-heptose 1-phosphate, yielding ADP-D-glycero-beta-D-manno-heptose. This is Bifunctional protein HldE from Coxiella burnetii (strain RSA 331 / Henzerling II).